We begin with the raw amino-acid sequence, 591 residues long: L-fucose isomerase (591 aa).

Residues Glu337 and Asp361 each act as proton acceptor in the active site. Mn(2+) is bound by residues Glu337, Asp361, and His528.

It belongs to the L-fucose isomerase family. In terms of assembly, homohexamer. Mn(2+) is required as a cofactor.

It is found in the cytoplasm. It catalyses the reaction L-fucose = L-fuculose. It functions in the pathway carbohydrate degradation; L-fucose degradation; L-lactaldehyde and glycerone phosphate from L-fucose: step 1/3. Its function is as follows. Converts the aldose L-fucose into the corresponding ketose L-fuculose. In Salmonella choleraesuis (strain SC-B67), this protein is L-fucose isomerase.